A 464-amino-acid polypeptide reads, in one-letter code: RCC1-like G exchanging factor-like protein (464 aa).

The N-terminal 37 residues, 1–37 (MALVALVAGARLGRRLSGPGLGRGHWTAAGRSRSRRE), are a transit peptide targeting the mitochondrion. RCC1 repeat units lie at residues 58–124 (ADRV…LSSK), 128–191 (VTKV…VLTD), 193–247 (EGVF…FLTD), 248–300 (KGEV…AVSA), 302–353 (GGLF…VLNG), 354–411 (EGHV…ALTN), and 412–461 (KGEL…TLAK).

In terms of assembly, forms a regulatory protein-RNA complex, consisting of RCC1L, NGRN, RPUSD3, RPUSD4, TRUB2, FASTKD2 and 16S mt-rRNA. Interacts with 16S mt-rRNA; this interaction is direct. Interacts with OPA1; this interaction is direct. Asociates with the mitochondrial ribosome large subunit (mt-LSU). As to quaternary structure, asociates with the mitochondrial ribosome small subunit (mt-SSU). In terms of tissue distribution, ubiquitous.

It localises to the mitochondrion membrane. It is found in the mitochondrion inner membrane. In terms of biological role, guanine nucleotide exchange factor (GEF) for mitochondrial dynamin-related GTPase OPA1. Activates OPA1, by exchanging bound GDP for free GTP, and drives OPA1 and MFN1-dependent mitochondrial fusion. Plays an essential role in mitochondrial ribosome biogenesis. As a component of a functional protein-RNA module, consisting of RCC1L, NGRN, RPUSD3, RPUSD4, TRUB2, FASTKD2 and 16S mitochondrial ribosomal RNA (16S mt-rRNA), controls 16S mt-rRNA abundance and is required for intra-mitochondrial translation of core subunits of the oxidative phosphorylation system. Plays an essential role in mitochondrial ribosome biogenesis via its association with GTPases that play a role in the assembly of the large ribosome subunit. Functionally, plays an essential role in mitochondrial ribosome biogenesis via its association with GTPases that play a role in the assembly of the small ribosome subunit. This Homo sapiens (Human) protein is RCC1-like G exchanging factor-like protein.